We begin with the raw amino-acid sequence, 507 residues long: Glycerol kinase (507 aa).

T15 contributes to the ADP binding site. ATP contacts are provided by T15, T16, and S17. Sn-glycerol 3-phosphate is bound at residue T15. R19 contributes to the ADP binding site. Sn-glycerol 3-phosphate-binding residues include R85, E86, Y137, and D250. Residues R85, E86, Y137, D250, and Q251 each coordinate glycerol. 2 residues coordinate ADP: T272 and G316. Residues T272, G316, Q320, and G417 each coordinate ATP. G417 serves as a coordination point for ADP.

Belongs to the FGGY kinase family.

It carries out the reaction glycerol + ATP = sn-glycerol 3-phosphate + ADP + H(+). The protein operates within polyol metabolism; glycerol degradation via glycerol kinase pathway; sn-glycerol 3-phosphate from glycerol: step 1/1. With respect to regulation, inhibited by fructose 1,6-bisphosphate (FBP). Key enzyme in the regulation of glycerol uptake and metabolism. Catalyzes the phosphorylation of glycerol to yield sn-glycerol 3-phosphate. The chain is Glycerol kinase from Mycoplasmopsis pulmonis (strain UAB CTIP) (Mycoplasma pulmonis).